The primary structure comprises 231 residues: Protein crossbronx homolog (231 aa).

Residues 14 to 168 enclose the UBC core domain; that stretch reads LQEYKILTEY…VEECVRLSQA (155 aa).

The protein belongs to the ubiquitin-conjugating enzyme family. FTS subfamily.

This chain is Protein crossbronx homolog, found in Culex quinquefasciatus (Southern house mosquito).